Here is a 245-residue protein sequence, read N- to C-terminus: Protein crossbronx (245 aa).

The UBC core domain occupies 20–177 (QQEYKILAEY…VQESIVESKS (158 aa)).

This sequence belongs to the ubiquitin-conjugating enzyme family. FTS subfamily.

The chain is Protein crossbronx (cbx) from Drosophila virilis (Fruit fly).